Reading from the N-terminus, the 109-residue chain is Thiosulfate sulfurtransferase GlpE (109 aa).

The 89-residue stretch at 16 to 104 (RNAGAVIVDI…WRHTYPSDVE (89 aa)) folds into the Rhodanese domain. Residue C64 is the Cysteine persulfide intermediate of the active site.

This sequence belongs to the GlpE family.

Its subcellular location is the cytoplasm. It carries out the reaction thiosulfate + hydrogen cyanide = thiocyanate + sulfite + 2 H(+). The catalysed reaction is thiosulfate + [thioredoxin]-dithiol = [thioredoxin]-disulfide + hydrogen sulfide + sulfite + 2 H(+). Its function is as follows. Transferase that catalyzes the transfer of sulfur from thiosulfate to thiophilic acceptors such as cyanide or dithiols. May function in a CysM-independent thiosulfate assimilation pathway by catalyzing the conversion of thiosulfate to sulfite, which can then be used for L-cysteine biosynthesis. This is Thiosulfate sulfurtransferase GlpE from Stutzerimonas stutzeri (strain A1501) (Pseudomonas stutzeri).